A 171-amino-acid chain; its full sequence is UPF0316 protein Exig_2248 (171 aa).

Helical transmembrane passes span 4 to 24 (ILLI…RTIM), 31 to 51 (IIAG…LGIV), and 57 to 77 (TVGM…GGFV).

The protein belongs to the UPF0316 family.

It is found in the cell membrane. The protein is UPF0316 protein Exig_2248 of Exiguobacterium sibiricum (strain DSM 17290 / CCUG 55495 / CIP 109462 / JCM 13490 / 255-15).